Consider the following 121-residue polypeptide: Small ribosomal subunit protein uS13 (121 aa).

The tract at residues 91 to 121 (HRRGLPVRGQKTKNNARTRKGPVKTVANKKK) is disordered.

This sequence belongs to the universal ribosomal protein uS13 family. Part of the 30S ribosomal subunit. Forms a loose heterodimer with protein S19. Forms two bridges to the 50S subunit in the 70S ribosome.

Functionally, located at the top of the head of the 30S subunit, it contacts several helices of the 16S rRNA. In the 70S ribosome it contacts the 23S rRNA (bridge B1a) and protein L5 of the 50S subunit (bridge B1b), connecting the 2 subunits; these bridges are implicated in subunit movement. Contacts the tRNAs in the A and P-sites. The protein is Small ribosomal subunit protein uS13 of Staphylococcus aureus (strain Mu3 / ATCC 700698).